We begin with the raw amino-acid sequence, 337 residues long: Phosphatidate cytidylyltransferase, mitochondrial (337 aa).

The protein belongs to the TAM41 family. Requires Mg(2+) as cofactor.

It is found in the mitochondrion inner membrane. The enzyme catalyses a 1,2-diacyl-sn-glycero-3-phosphate + CTP + H(+) = a CDP-1,2-diacyl-sn-glycerol + diphosphate. The protein operates within phospholipid metabolism; CDP-diacylglycerol biosynthesis; CDP-diacylglycerol from sn-glycerol 3-phosphate: step 3/3. In terms of biological role, catalyzes the conversion of phosphatidic acid (PA) to CDP-diacylglycerol (CDP-DAG), an essential intermediate in the synthesis of phosphatidylglycerol, cardiolipin and phosphatidylinositol. This is Phosphatidate cytidylyltransferase, mitochondrial (Tamm41) from Mus musculus (Mouse).